A 349-amino-acid polypeptide reads, in one-letter code: DNA polymerase IV (349 aa).

A UmuC domain is found at 3-187 (VLFVDFDYFF…LDISKVPGVG (185 aa)). Residues aspartate 7 and aspartate 105 each coordinate Mg(2+). Glutamate 106 is a catalytic residue.

The protein belongs to the DNA polymerase type-Y family. Monomer. Mg(2+) is required as a cofactor.

Its subcellular location is the cytoplasm. It catalyses the reaction DNA(n) + a 2'-deoxyribonucleoside 5'-triphosphate = DNA(n+1) + diphosphate. Poorly processive, error-prone DNA polymerase involved in untargeted mutagenesis. Copies undamaged DNA at stalled replication forks, which arise in vivo from mismatched or misaligned primer ends. These misaligned primers can be extended by PolIV. Exhibits no 3'-5' exonuclease (proofreading) activity. May be involved in translesional synthesis. The protein is DNA polymerase IV of Metallosphaera sedula (strain ATCC 51363 / DSM 5348 / JCM 9185 / NBRC 15509 / TH2).